A 359-amino-acid chain; its full sequence is Flavonoid 8-O-methyltransferase 1 (359 aa).

Asp-223 is an S-adenosyl-L-methionine binding site. His-261 (proton acceptor) is an active-site residue.

The protein belongs to the class I-like SAM-binding methyltransferase superfamily. Cation-independent O-methyltransferase family. Expressed in leaves and trichomes, especially in cv. SD and cv. EMX-1, but barely in cv. MC and cv. SW.

It carries out the reaction an 8-hydroxyflavone + S-adenosyl-L-methionine = an 8-methoxyflavone + S-adenosyl-L-homocysteine + H(+). The enzyme catalyses 4',7,8-trihydroxyflavone + S-adenosyl-L-methionine = 4',7-dihydroxy-8-methoxyflavone + S-adenosyl-L-homocysteine + H(+). It catalyses the reaction 7,8-dihydroxyflavone + S-adenosyl-L-methionine = 7-hydroxy-8-methoxyflavone + S-adenosyl-L-homocysteine + H(+). The catalysed reaction is 3',4',7,8-tetrahydroxyflavone + S-adenosyl-L-methionine = 3',4,7-trihydroxy-8-methoxyflavone + S-adenosyl-L-homocysteine + H(+). It participates in flavonoid metabolism. With respect to regulation, strongly inhibited by gardenin B (GARD B). Functionally, cation-independent flavonoid 8-O-methyltransferase involved in the biosynthesis of polymethoxylated flavonoids natural products such as nevadensin and salvigenin, aroma compounds which contribute to the flavor of sweet basil, and exhibit pharmacological activities such as anti-allergic, anti-oxidant, antibacterial, anti-proliferative, and anti-inflammatory effects. Catalyzes S-adenosylmethionine-dependent regioselective 8-O-methylation of flavonoids; mediates likely the conversion of pilosin (PIL) to nevadensin (NEV) and of 8-hydroxysalvigenin (8-OH-SALV) to gardenin B (GARD B). Can also use 3',4',7,8-tetrahydroxyflavone as substrate. Accepts other unnatural O-diphenols including 7,8,4'-trihydroxy-flavone and 7-O-methyl-8-hydroxy-flavone, and, with a lower efficiency, 7,8-dihydroxy-flavone, as substrates. This Ocimum basilicum (Sweet basil) protein is Flavonoid 8-O-methyltransferase 1.